We begin with the raw amino-acid sequence, 440 residues long: Chromosome partition protein MukF (440 aa).

A leucine-zipper region spans residues 208–236 (LSETSGTLRELQDTLEAAGDKLQANLLRI).

The protein belongs to the MukF family. Interacts, and probably forms a ternary complex, with MukE and MukB via its C-terminal region. The complex formation is stimulated by calcium or magnesium. It is required for an interaction between MukE and MukB.

It localises to the cytoplasm. It is found in the nucleoid. In terms of biological role, involved in chromosome condensation, segregation and cell cycle progression. May participate in facilitating chromosome segregation by condensation DNA from both sides of a centrally located replisome during cell division. Not required for mini-F plasmid partitioning. Probably acts via its interaction with MukB and MukE. Overexpression results in anucleate cells. It has a calcium binding activity. This Escherichia coli O127:H6 (strain E2348/69 / EPEC) protein is Chromosome partition protein MukF.